The primary structure comprises 288 residues: Glycine--tRNA ligase alpha subunit (288 aa).

The protein belongs to the class-II aminoacyl-tRNA synthetase family. As to quaternary structure, tetramer of two alpha and two beta subunits.

It localises to the cytoplasm. It catalyses the reaction tRNA(Gly) + glycine + ATP = glycyl-tRNA(Gly) + AMP + diphosphate. In Rickettsia massiliae (strain Mtu5), this protein is Glycine--tRNA ligase alpha subunit.